The primary structure comprises 193 residues: Protein SINE3 (193 aa).

The disordered stretch occupies residues 15 to 35; sequence SELGAKRLKDPEMKNRKVTTE. Residues 18–35 show a composition bias toward basic and acidic residues; that stretch reads GAKRLKDPEMKNRKVTTE. Positions 155-193 constitute a KASH domain; the sequence is VTVKFRIVLLSFILWAILAAIVVFFSSGEERAYRGPLPT. The chain crosses the membrane as a helical span at residues 161–181; the sequence is IVLLSFILWAILAAIVVFFSS. The Required for nuclear localization signature appears at 190–193; it reads PLPT.

In terms of assembly, interacts with SUN1 and SUN2.

Its subcellular location is the nucleus membrane. This Arabidopsis thaliana (Mouse-ear cress) protein is Protein SINE3.